A 158-amino-acid chain; its full sequence is Endoribonuclease YbeY (158 aa).

Positions 119, 123, and 129 each coordinate Zn(2+).

The protein belongs to the endoribonuclease YbeY family. Zn(2+) serves as cofactor.

Its subcellular location is the cytoplasm. Functionally, single strand-specific metallo-endoribonuclease involved in late-stage 70S ribosome quality control and in maturation of the 3' terminus of the 16S rRNA. This Chlamydia felis (strain Fe/C-56) (Chlamydophila felis) protein is Endoribonuclease YbeY.